The sequence spans 34 residues: Photosystem II reaction center protein Psb30 (34 aa).

A helical membrane pass occupies residues 6-26 (VIGQLTSLAMIVLVGPAVIVV).

It belongs to the Psb30/Ycf12 family. PSII is composed of 1 copy each of membrane proteins PsbA, PsbB, PsbC, PsbD, PsbE, PsbF, PsbH, PsbI, PsbJ, PsbK, PsbL, PsbM, PsbT, PsbX, PsbY, PsbZ, Psb30/Ycf12, peripheral proteins of the oxygen-evolving complex and a large number of cofactors. It forms dimeric complexes.

The protein localises to the plastid. Its subcellular location is the chloroplast thylakoid membrane. A core subunit of photosystem II (PSII), probably helps stabilize the reaction center. This is Photosystem II reaction center protein Psb30 from Gracilaria tenuistipitata var. liui (Red alga).